Consider the following 162-residue polypeptide: Putative colanic acid biosynthesis acetyltransferase WcaB (162 aa).

This sequence belongs to the transferase hexapeptide repeat family.

Its pathway is slime biogenesis; slime polysaccharide biosynthesis. In Escherichia coli O157:H7, this protein is Putative colanic acid biosynthesis acetyltransferase WcaB (wcaB).